We begin with the raw amino-acid sequence, 364 residues long: Protein spindle-F (364 aa).

Residues 1 to 26 (MEASAAKITPMASSMSASGSTNSPSS) form a disordered region. The span at 9–26 (TPMASSMSASGSTNSPSS) shows a compositional bias: low complexity. A coiled-coil region spans residues 32-114 (ALQVALQTIK…GMVSNENRRL (83 aa)). Phosphoserine is present on Ser-53. Positions 56 to 75 (EENQQLREASSRSEGAPRAN) are disordered. 3 positions are modified to phosphoserine: Ser-85, Ser-172, and Ser-202. Residues 210–243 (AKRCLDGLQELRREAMKQQQELRSVMTLLENRIA) adopt a coiled-coil conformation. Residues Ser-264 and Ser-270 each carry the phosphoserine modification. Residues 310-336 (EKTCPMCGKQYSSQVSFNAFREHVEMH) form a UBZ1-type zinc finger. Zn(2+) contacts are provided by Cys-313 and Cys-316. The residue at position 325 (Ser-325) is a Phosphoserine. Residues His-332 and His-336 each coordinate Zn(2+). Ser-349 is subject to Phosphoserine.

As to quaternary structure, forms homooligomers. Interacts with the dynein light chain ctp. Interacts (via C-terminus) with IKKepsilon; this leads to phosphorylation of spn-F. Forms ternary complexes with ctp and IKKepsilon; this is required for spn-F redistribution from puncta in larval neurons and for dendrite pruning. Interacts with ctp and IKKepsilon through distinct regions. Interacts (via C-terminus) with jvl. Phosphorylated by IKKepsilon. Phosphorylation is required for spn-F neuronal distribution and dendrite pruning and reduces spn-F homooligomerization. It does not lead to spn-F degradation. In terms of tissue distribution, in pupal bristles, localizes to the bristle tip throughout the elongation period (at protein level).

The protein resides in the cytoplasm. It is found in the cytoskeleton. The protein localises to the cell projection. Its subcellular location is the axon. It localises to the dendrite. The protein resides in the perikaryon. Its function is as follows. Plays a role in oocyte axis determination and microtubule organization during oogenesis. Also required for polarized organization of the bristle. Required, with jvl, for activation of the kinase IKKepsilon in the germ line. Also required for localization of IKKepsilon to the distal tip of elongating bristles by acting as an adapter linking IKKepsilon and cytoplasmic dynein. Involved in dendrite pruning in larval sensory neurons during metamorphosis. The chain is Protein spindle-F from Drosophila melanogaster (Fruit fly).